Here is a 153-residue protein sequence, read N- to C-terminus: Penitrem biosynthesis cluster 1 protein I (153 aa).

It functions in the pathway secondary metabolite biosynthesis. Functionally, part of the gene cluster that mediates the biosynthesis of the indole diterpenes penitrems. The geranylgeranyl diphosphate (GGPP) synthase ptmG catalyzes the first step in penitrem biosynthesis via conversion of farnesyl pyrophosphate and isopentyl pyrophosphate into geranylgeranyl pyrophosphate (GGPP). Condensation of indole-3-glycerol phosphate with GGPP by the prenyl transferase ptmC then forms 3-geranylgeranylindole (3-GGI). Epoxidation by the FAD-dependent monooxygenase ptmM leads to a epoxidized-GGI that is substrate of the terpene cyclase ptmB for cyclization to yield paspaline. Paspaline is subsequently converted to 13-desoxypaxilline by the cytochrome P450 monooxygenase ptmP, the latter being then converted to paxilline by the cytochrome P450 monooxygenase ptmQ. Paxilline is converted to beta-paxitriol via C-10 ketoreduction by the short-chain dehydrogenase ptmH which can be monoprenylated at the C-20 by the indole diterpene prenyltransferase ptmD. A two-step elimination (acetylation and elimination) process performed by the O-acetyltransferase ptmV and ptmI leads to the production of the prenylated form of penijanthine. The FAD-linked oxidoreductase ptmO then converts the prenylated form of penijanthine into PC-M5 which is in turn transformed into PC-M4 by the aromatic dimethylallyltransferase ptmE. Five sequential oxidative transformations performed by the cytochrome P450 monooxygenases ptmK, ptmU, ptmL, ptmN and ptmJ yield the various penitrem compounds. PtmK, ptmU and ptmM are involved in the formation of the key bicyclic ring of penitrem C via the formation of the intermediates secopenitrem D and penitrem D. PtmL catalyzes the epoxidation of penitrem D and C to yield penitrem B and F, respectively. PtmJ catalyzes the last benzylic hydroxylation to convert penitrem B to prenitrem E and penitrem F to penitrem A. The chain is Penitrem biosynthesis cluster 1 protein I from Penicillium ochrochloron.